The sequence spans 301 residues: F-box protein At4g02733 (301 aa).

An F-box domain is found at Asn-91–Val-146.

This Arabidopsis thaliana (Mouse-ear cress) protein is F-box protein At4g02733.